The following is a 252-amino-acid chain: 1-(5-phosphoribosyl)-5-[(5-phosphoribosylamino)methylideneamino] imidazole-4-carboxamide isomerase (252 aa).

Asp-8 acts as the Proton acceptor in catalysis. The Proton donor role is filled by Asp-129.

The protein belongs to the HisA/HisF family.

The protein localises to the cytoplasm. The catalysed reaction is 1-(5-phospho-beta-D-ribosyl)-5-[(5-phospho-beta-D-ribosylamino)methylideneamino]imidazole-4-carboxamide = 5-[(5-phospho-1-deoxy-D-ribulos-1-ylimino)methylamino]-1-(5-phospho-beta-D-ribosyl)imidazole-4-carboxamide. It functions in the pathway amino-acid biosynthesis; L-histidine biosynthesis; L-histidine from 5-phospho-alpha-D-ribose 1-diphosphate: step 4/9. In Synechococcus sp. (strain RCC307), this protein is 1-(5-phosphoribosyl)-5-[(5-phosphoribosylamino)methylideneamino] imidazole-4-carboxamide isomerase.